Consider the following 416-residue polypeptide: MDLTVLGKAAKAASFQLATASTAQKNQALASMADQLEAQSASILAANAKDIALGREAGLSDAMLDRLLLNESRLQAIANDVRNVIKLNDPVGSEIDSRVLENGMSLARRRVPLGVVGVIYEARPNVTIDIAALCLKTGNAAILRGGKETFFSNMELVKVIQSALDKAGLPAASVQYIEKPDRELVTQLLKMDDYVDMIIPRGGAGLHKMCKENSTVPVIIGGFGISHIFVDESADLDKSVAVIENAKVQRPSACNALDTLLVHQAIAKPLLDKLIAKLNGKVAFVAEPKAKALMSSAAELRDAQAGDFDTEWLSYTLGVKVVQDVQEAIEHMREHNASHSDAIMTNDLYNAELFVNTAGSAAVYVNASTRFTDGAQFGLGAEVAVSTQKLHARGPMGLEELTSYKWVGKANYLSRS.

Belongs to the gamma-glutamyl phosphate reductase family.

The protein resides in the cytoplasm. The catalysed reaction is L-glutamate 5-semialdehyde + phosphate + NADP(+) = L-glutamyl 5-phosphate + NADPH + H(+). Its pathway is amino-acid biosynthesis; L-proline biosynthesis; L-glutamate 5-semialdehyde from L-glutamate: step 2/2. Functionally, catalyzes the NADPH-dependent reduction of L-glutamate 5-phosphate into L-glutamate 5-semialdehyde and phosphate. The product spontaneously undergoes cyclization to form 1-pyrroline-5-carboxylate. The chain is Gamma-glutamyl phosphate reductase from Vibrio cholerae serotype O1 (strain ATCC 39541 / Classical Ogawa 395 / O395).